A 103-amino-acid polypeptide reads, in one-letter code: c-Myc-binding protein (103 aa).

Belongs to the AMY1 family. Binds via its C-terminal region to the N-terminal region of MYC. Associates with AKAP1/S-AKAP84. Interacts with MYCBPAP. Interacts with CFAP91.

The protein resides in the cytoplasm. The protein localises to the nucleus. Functionally, may control the transcriptional activity of MYC. Stimulates the activation of E box-dependent transcription by MYC. The chain is c-Myc-binding protein (MYCBP) from Pongo abelii (Sumatran orangutan).